The sequence spans 93 residues: Stromal cell-derived factor 1 (93 aa).

The N-terminal stretch at 1–21 (MDAKVVAVLALVLAALCISDG) is a signal peptide. The short motif at 22 to 23 (KP) is the Receptor activation motif element. Residues 29 to 33 (RCPCR) are receptor and heparin binding. 2 disulfides stabilise this stretch: cysteine 30–cysteine 55 and cysteine 32–cysteine 71. Receptor binding stretches follow at residues 39-41 (IAR), 48-50 (KIL), and 60-70 (VARLKNNNRQV). Heparin is bound by residues 41-51 (RANVKHLKILN), arginine 62, glutamine 69, and lysine 85.

The protein belongs to the intercrine alpha (chemokine CxC) family. As to quaternary structure, monomer or homodimer; in equilibrium. Dimer formation is induced by non acidic pH and the presence of multivalent anions, and by binding to CXCR4 or heparin. Monomeric form is required for full chemotactic activity and resistance to ischemia/reperfusion injury, whereas the dimeric form acts as a partial agonist of CXCR4, stimulating Ca2+ mobilization but with no chemotactic activity and instead acts as a selective antagonist that blocks chemotaxis induced by the monomeric form. Interacts with the N-terminus of ACKR3. Interacts with integrin subunit ITGB3 (via the allosteric site (site 2)). Interacts with TNFAIP6 (via Link domain). In terms of tissue distribution, highest expression levels detected in kidney, liver, spleen and muscle. Isoform Alpha is expressed ubiquitously but at varying levels, while isoform Beta displays tissue-specific expression, with expression detected in kidney, liver, heart, spleen and muscle but not in lung, colon, brain, skin and stomach.

It localises to the secreted. Chemoattractant active on T-lymphocytes and monocytes but not neutrophils. Activates the C-X-C chemokine receptor CXCR4 to induce a rapid and transient rise in the level of intracellular calcium ions and chemotaxis. Also binds to atypical chemokine receptor ACKR3, which activates the beta-arrestin pathway and acts as a scavenger receptor for SDF-1. Binds to the allosteric site (site 2) of integrins and activates integrins ITGAV:ITGB3, ITGA4:ITGB1 and ITGA5:ITGB1 in a CXCR4-independent manner. Acts as a positive regulator of monocyte migration and a negative regulator of monocyte adhesion via the LYN kinase. Stimulates migration of monocytes and T-lymphocytes through its receptors, CXCR4 and ACKR3, and decreases monocyte adherence to surfaces coated with ICAM-1, a ligand for beta-2 integrins. SDF1A/CXCR4 signaling axis inhibits beta-2 integrin LFA-1 mediated adhesion of monocytes to ICAM-1 through LYN kinase. Plays a protective role after myocardial infarction. Induces down-regulation and internalization of ACKR3 expressed in various cells. Has several critical functions during embryonic development; required for B-cell lymphopoiesis, myelopoiesis in bone marrow and heart ventricular septum formation. Stimulates the proliferation of bone marrow-derived B-cell progenitors in the presence of IL7 as well as growth of stromal cell-dependent pre-B-cells. The chain is Stromal cell-derived factor 1 (Cxcl12) from Mus musculus (Mouse).